A 28-amino-acid chain; its full sequence is Putative antitoxin AF_1079 (28 aa).

It belongs to the UPF0165 family.

Functionally, possibly the antitoxin component of a type II toxin-antitoxin (TA) system. This is Putative antitoxin AF_1079 from Archaeoglobus fulgidus (strain ATCC 49558 / DSM 4304 / JCM 9628 / NBRC 100126 / VC-16).